Reading from the N-terminus, the 96-residue chain is Small ribosomal subunit protein bS6 (96 aa).

The protein belongs to the bacterial ribosomal protein bS6 family.

Binds together with bS18 to 16S ribosomal RNA. This chain is Small ribosomal subunit protein bS6, found in Streptococcus suis (strain 98HAH33).